A 329-amino-acid polypeptide reads, in one-letter code: Serpentine receptor class alpha-7 (329 aa).

The next 7 membrane-spanning stretches (helical) occupy residues 25–45 (YVYL…VKIV), 57–77 (ILLF…LFSA), 104–124 (YLKV…GLLL), 143–163 (VGIA…KIII), 187–207 (RLFA…SVLL), 237–257 (TICF…FGIF), and 273–293 (FIVV…ILLV).

This sequence belongs to the nematode receptor-like protein sra family.

The protein localises to the membrane. The protein is Serpentine receptor class alpha-7 (sra-7) of Caenorhabditis elegans.